The following is a 102-amino-acid chain: Small ribosomal subunit protein eS24 (102 aa).

Belongs to the eukaryotic ribosomal protein eS24 family.

This chain is Small ribosomal subunit protein eS24, found in Methanobrevibacter smithii (strain ATCC 35061 / DSM 861 / OCM 144 / PS).